A 319-amino-acid polypeptide reads, in one-letter code: GATA transcription factor 18 (319 aa).

The segment covering methionine 1–aspartate 15 has biased composition (low complexity). Residues methionine 1–leucine 74 are disordered. Residues asparagine 32 to proline 60 show a composition bias toward acidic residues. One can recognise a Tify domain in the interval leucine 74–serine 109. The region spanning arginine 143–arginine 185 is the CCT domain. A GATA-type zinc finger spans residues cysteine 215 to cysteine 242. A disordered region spans residues isoleucine 292–glutamine 319.

The protein belongs to the type IV zinc-finger family. Class C subfamily.

It localises to the nucleus. Transcriptional activator that specifically binds 5'-GATA-3' or 5'-GAT-3' motifs within gene promoters. This chain is GATA transcription factor 18, found in Oryza sativa subsp. indica (Rice).